Consider the following 127-residue polypeptide: Fatty acid-binding protein, liver-type (127 aa).

The protein belongs to the calycin superfamily. Fatty-acid binding protein (FABP) family.

The protein localises to the cytoplasm. This chain is Fatty acid-binding protein, liver-type (fabp1), found in Epinephelus coioides (Orange-spotted grouper).